We begin with the raw amino-acid sequence, 408 residues long: Argininosuccinate synthase (408 aa).

Residues A10–S18 and A37 contribute to the ATP site. 2 residues coordinate L-citrulline: Y90 and S95. G120 provides a ligand contact to ATP. L-aspartate contacts are provided by T122, N126, and D127. N126 contacts L-citrulline. L-citrulline-binding residues include R130, S181, S190, E266, and Y278.

Belongs to the argininosuccinate synthase family. Type 1 subfamily. Homotetramer.

Its subcellular location is the cytoplasm. The catalysed reaction is L-citrulline + L-aspartate + ATP = 2-(N(omega)-L-arginino)succinate + AMP + diphosphate + H(+). It functions in the pathway amino-acid biosynthesis; L-arginine biosynthesis; L-arginine from L-ornithine and carbamoyl phosphate: step 2/3. This chain is Argininosuccinate synthase, found in Chromobacterium violaceum (strain ATCC 12472 / DSM 30191 / JCM 1249 / CCUG 213 / NBRC 12614 / NCIMB 9131 / NCTC 9757 / MK).